The primary structure comprises 294 residues: Phosphatidylserine decarboxylase proenzyme (294 aa).

Catalysis depends on charge relay system; for autoendoproteolytic cleavage activity residues Asp-88, His-145, and Ser-248. The active-site Schiff-base intermediate with substrate; via pyruvic acid; for decarboxylase activity is the Ser-248. Ser-248 bears the Pyruvic acid (Ser); by autocatalysis mark.

This sequence belongs to the phosphatidylserine decarboxylase family. PSD-B subfamily. Prokaryotic type I sub-subfamily. Heterodimer of a large membrane-associated beta subunit and a small pyruvoyl-containing alpha subunit. Requires pyruvate as cofactor. Is synthesized initially as an inactive proenzyme. Formation of the active enzyme involves a self-maturation process in which the active site pyruvoyl group is generated from an internal serine residue via an autocatalytic post-translational modification. Two non-identical subunits are generated from the proenzyme in this reaction, and the pyruvate is formed at the N-terminus of the alpha chain, which is derived from the carboxyl end of the proenzyme. The autoendoproteolytic cleavage occurs by a canonical serine protease mechanism, in which the side chain hydroxyl group of the serine supplies its oxygen atom to form the C-terminus of the beta chain, while the remainder of the serine residue undergoes an oxidative deamination to produce ammonia and the pyruvoyl prosthetic group on the alpha chain. During this reaction, the Ser that is part of the protease active site of the proenzyme becomes the pyruvoyl prosthetic group, which constitutes an essential element of the active site of the mature decarboxylase.

It is found in the cell membrane. It catalyses the reaction a 1,2-diacyl-sn-glycero-3-phospho-L-serine + H(+) = a 1,2-diacyl-sn-glycero-3-phosphoethanolamine + CO2. Its pathway is phospholipid metabolism; phosphatidylethanolamine biosynthesis; phosphatidylethanolamine from CDP-diacylglycerol: step 2/2. Its function is as follows. Catalyzes the formation of phosphatidylethanolamine (PtdEtn) from phosphatidylserine (PtdSer). In Herminiimonas arsenicoxydans, this protein is Phosphatidylserine decarboxylase proenzyme.